A 417-amino-acid polypeptide reads, in one-letter code: UPF0761 membrane protein Daci_4966 (417 aa).

6 helical membrane-spanning segments follow: residues 49–69 (VLALVPFFTVALALFTAFPIF), 106–126 (QLGMAGFSILVITAVALILTI), 146–166 (VLIYWAAITLGPLVLGLSLVL), 187–207 (FIFDSIEYLALAAGMAGLYHY), 235–255 (ALGLYLASVPTYSVIYGTFAT), and 256–276 (LPILLIWIYMAWIIVLLGAVV).

The protein belongs to the UPF0761 family.

Its subcellular location is the cell inner membrane. The polypeptide is UPF0761 membrane protein Daci_4966 (Delftia acidovorans (strain DSM 14801 / SPH-1)).